Reading from the N-terminus, the 439-residue chain is CBL-interacting protein kinase 14 (439 aa).

Residues 12-267 (YELGRLLGKG…IQKIKESTWF (256 aa)) form the Protein kinase domain. ATP-binding positions include 18–26 (LGKGTFGKV) and Lys41. Asp135 acts as the Proton acceptor in catalysis. The tract at residues 153–182 (DFGLSALSESKRQDGLLHTTCGTPAYVAPE) is activation loop. An NAF domain is found at 298-333 (RKKNAHEDVKPMSVTNLNAFEIISFSKGFDLSGMFI). Residues 338–367 (RNEARFTSDKSASTIISKLEDVAKALNLRV) are PPI.

The protein belongs to the protein kinase superfamily. CAMK Ser/Thr protein kinase family. SNF1 subfamily. Mn(2+) serves as cofactor.

The enzyme catalyses L-seryl-[protein] + ATP = O-phospho-L-seryl-[protein] + ADP + H(+). It carries out the reaction L-threonyl-[protein] + ATP = O-phospho-L-threonyl-[protein] + ADP + H(+). In terms of biological role, CIPK serine-threonine protein kinases interact with CBL proteins. Binding of a CBL protein to the regulatory NAF domain of CIPK protein lead to the activation of the kinase in a calcium-dependent manner. The chain is CBL-interacting protein kinase 14 (CIPK14) from Oryza sativa subsp. japonica (Rice).